The sequence spans 351 residues: sn-glycerol-3-phosphate import ATP-binding protein UgpC (351 aa).

The ABC transporter domain occupies 4-235 (IVLDNVRKSY…PASTFVATFI (232 aa)). ATP is bound at residue 37–44 (GPSGCGKS).

It belongs to the ABC transporter superfamily. sn-glycerol-3-phosphate importer (TC 3.A.1.1.3) family. The complex is composed of two ATP-binding proteins (UgpC), two transmembrane proteins (UgpA and UgpE) and a solute-binding protein (UgpB).

It is found in the cell inner membrane. It catalyses the reaction sn-glycerol 3-phosphate(out) + ATP + H2O = sn-glycerol 3-phosphate(in) + ADP + phosphate + H(+). Its function is as follows. Part of the ABC transporter complex UgpBAEC involved in sn-glycerol-3-phosphate (G3P) import. Responsible for energy coupling to the transport system. The protein is sn-glycerol-3-phosphate import ATP-binding protein UgpC of Brucella abortus biovar 1 (strain 9-941).